The sequence spans 61 residues: Small ribosomal subunit protein uS14 (61 aa).

Cys24, Cys27, Cys40, and Cys43 together coordinate Zn(2+).

This sequence belongs to the universal ribosomal protein uS14 family. Zinc-binding uS14 subfamily. In terms of assembly, part of the 30S ribosomal subunit. Contacts proteins S3 and S10. The cofactor is Zn(2+).

Binds 16S rRNA, required for the assembly of 30S particles and may also be responsible for determining the conformation of the 16S rRNA at the A site. This is Small ribosomal subunit protein uS14 from Clostridium perfringens (strain ATCC 13124 / DSM 756 / JCM 1290 / NCIMB 6125 / NCTC 8237 / Type A).